The chain runs to 536 residues: Bifunctional purine biosynthesis protein PurH (536 aa).

Residues 8 to 158 (IPAPDEVRIK…KNHAYVTVVT (151 aa)) form the MGS-like domain.

This sequence belongs to the PurH family.

It carries out the reaction (6R)-10-formyltetrahydrofolate + 5-amino-1-(5-phospho-beta-D-ribosyl)imidazole-4-carboxamide = 5-formamido-1-(5-phospho-D-ribosyl)imidazole-4-carboxamide + (6S)-5,6,7,8-tetrahydrofolate. It catalyses the reaction IMP + H2O = 5-formamido-1-(5-phospho-D-ribosyl)imidazole-4-carboxamide. It functions in the pathway purine metabolism; IMP biosynthesis via de novo pathway; 5-formamido-1-(5-phospho-D-ribosyl)imidazole-4-carboxamide from 5-amino-1-(5-phospho-D-ribosyl)imidazole-4-carboxamide (10-formyl THF route): step 1/1. Its pathway is purine metabolism; IMP biosynthesis via de novo pathway; IMP from 5-formamido-1-(5-phospho-D-ribosyl)imidazole-4-carboxamide: step 1/1. The chain is Bifunctional purine biosynthesis protein PurH from Sinorhizobium medicae (strain WSM419) (Ensifer medicae).